A 355-amino-acid chain; its full sequence is MEHIGFFPPHDGVSLRALAEHLGAELADEAFAGVIIKSIAPVYRAGDGDVCYLLSRKNRAELETCKASAIICLPTLSSLVPEHIPVLLSKKPHTDFALAGALLHPQAMRPVALTSTPTLISPTAFVDPTAKLEADVGVEPGAVVGPGAEIGEGTRIGAGAIIGPGVKIGRHCTIGGGASVLCSYLGNGVIIHNGARIGQDGFGYAPSPRGMIKIVQIGRVIIQDNVEIGANTTIDRGTMDDTVIGEGTKIDNQVQIGHNVRIGRYCAIVSQVGIAGSAVIGDGVQIGGHTGINGHIQIGDGVQIGAMSGVMNSIPAGERFAGIPARPLWDFLREAAEVAKRSGAREKKDGSAEHD.

Histidine 258 serves as the catalytic Proton acceptor.

This sequence belongs to the transferase hexapeptide repeat family. LpxD subfamily. As to quaternary structure, homotrimer.

The enzyme catalyses a UDP-3-O-[(3R)-3-hydroxyacyl]-alpha-D-glucosamine + a (3R)-hydroxyacyl-[ACP] = a UDP-2-N,3-O-bis[(3R)-3-hydroxyacyl]-alpha-D-glucosamine + holo-[ACP] + H(+). It participates in bacterial outer membrane biogenesis; LPS lipid A biosynthesis. Catalyzes the N-acylation of UDP-3-O-acylglucosamine using 3-hydroxyacyl-ACP as the acyl donor. Is involved in the biosynthesis of lipid A, a phosphorylated glycolipid that anchors the lipopolysaccharide to the outer membrane of the cell. This is UDP-3-O-acylglucosamine N-acyltransferase from Rhizobium rhizogenes (strain K84 / ATCC BAA-868) (Agrobacterium radiobacter).